The following is a 438-amino-acid chain: Glycogen synthase (438 aa).

Lysine 16 provides a ligand contact to ADP-alpha-D-glucose.

The protein belongs to the glycosyltransferase 1 family. Bacterial/plant glycogen synthase subfamily.

It catalyses the reaction [(1-&gt;4)-alpha-D-glucosyl](n) + ADP-alpha-D-glucose = [(1-&gt;4)-alpha-D-glucosyl](n+1) + ADP + H(+). The protein operates within glycan biosynthesis; glycogen biosynthesis. Synthesizes alpha-1,4-glucan chains using ADP-glucose. This Thermus caldophilus protein is Glycogen synthase.